Consider the following 317-residue polypeptide: Aquaporin-2 (317 aa).

The Cytoplasmic segment spans residues 1–75; sequence MSLRDDLTIN…RSQEFKMQHR (75 aa). A helical membrane pass occupies residues 76–96; that stretch reads EFLAEFIGTLILVLLTCGFCA. Residues 97 to 108 lie on the Extracellular side of the membrane; that stretch reads EQTLNIEKSKSW. Residues 109–129 form a helical membrane-spanning segment; the sequence is LTSSLGSGLSVLIGICVAGHV. The Cytoplasmic portion of the chain corresponds to 130–154; that stretch reads SGGHLNPAITIAFWVFSGFPIRKVP. The NPA 1 motif lies at 135 to 137; it reads NPA. Residues 155 to 175 traverse the membrane as a helical segment; sequence MYITAQLLGAFSGAALLYSIV. Residues 176-208 are Extracellular-facing; the sequence is EPAISQFDHGKRQILGELGTAGIFGTYPPLYVG. Residues 209-229 form a helical membrane-spanning segment; it reads TGSAVASEVVGTAMLLLVVMV. Over 230 to 242 the chain is Cytoplasmic; sequence TGHPNNLPFRTAQ. The helical transmembrane segment at 243-263 threads the bilayer; the sequence is GAMIALGVTTISLCIGYTSGF. The Extracellular segment spans residues 264–295; the sequence is SLNPARDFGPRLFTAVAGWGIDVFTVHHYYAL. An NPA 2 motif is present at residues 266-268; that stretch reads NPA. Residues 296–316 form a helical membrane-spanning segment; sequence VPMFAPILGGLAGGFIYTVFI. A topological domain (cytoplasmic) is located at residue Asp-317.

It belongs to the MIP/aquaporin (TC 1.A.8) family.

The protein localises to the cell membrane. It carries out the reaction H2O(in) = H2O(out). It catalyses the reaction glycerol(in) = glycerol(out). Its function is as follows. Water channel required to facilitate the transport of water across membranes. Contributes to water uptake of spores during the early stages of spore germination. Aquaporins AQP1 and AQP2 act as extracellular pH sensors and enable the spores to hydrate under favorable conditions and to commence germination. Wounded vegetables and fruit present acidic pH, so the optimal pH range for germination is adapted to the relevant host pH. This Rhizopus delemar (strain RA 99-880 / ATCC MYA-4621 / FGSC 9543 / NRRL 43880) (Mucormycosis agent) protein is Aquaporin-2.